Consider the following 140-residue polypeptide: Cystatin-C (140 aa).

The first 20 residues, 1–20, serve as a signal peptide directing secretion; that stretch reads MASPLRSLMLLLAVLAVAWA. The Secondary area of contact signature appears at 75 to 79; the sequence is QLVAG. Intrachain disulfides connect cysteine 93–cysteine 103 and cysteine 117–cysteine 137. Asparagine 99 carries N-linked (GlcNAc...) asparagine glycosylation.

Belongs to the cystatin family.

It is found in the secreted. In terms of biological role, as an inhibitor of cysteine proteinases, this protein is thought to serve an important physiological role as a local regulator of this enzyme activity. Known to inhibit cathepsin B, H, and L. The protein is Cystatin-C (Cst3) of Rattus norvegicus (Rat).